Here is a 314-residue protein sequence, read N- to C-terminus: Adenosine receptor A3 (314 aa).

Residues 1–14 (MAVNGTALLLANVT) are Extracellular-facing. N-linked (GlcNAc...) asparagine glycans are attached at residues asparagine 4 and asparagine 12. The chain crosses the membrane as a helical span at residues 15 to 37 (YITVEILIGLCAIVGNVLVIWVV). Residues 38–48 (KLNPSLQTTTF) are Cytoplasmic-facing. Residues 49–72 (YFIVSLALADIAVGVLVMPLAIVI) traverse the membrane as a helical segment. The Extracellular portion of the chain corresponds to 73–84 (SLGITIQFYNCL). A disulfide bridge connects residues cysteine 83 and cysteine 166. A helical membrane pass occupies residues 85 to 106 (FMTCLLLIFTHASIMSLLAIAV). Residues 107 to 126 (DRYLRVKLTVRYRRVTTQRR) are Cytoplasmic-facing. The chain crosses the membrane as a helical span at residues 127–148 (IWLALGLCWLVSFLVGLTPMFG). The Extracellular segment spans residues 149-177 (WNMKLTSEHQRNVTFLSCQFSSVMRMDYM). Asparagine 160 carries an N-linked (GlcNAc...) asparagine glycan. A helical membrane pass occupies residues 178 to 198 (VYFSFFTWILIPLVVMCAIYL). Residues 199–231 (DIFYVIRNKLNQNFSSSKETGAFYGREFKTAKS) lie on the Cytoplasmic side of the membrane. The chain crosses the membrane as a helical span at residues 232–255 (LFLVLFLFAFSWLPLSIINCITYF). Over 256 to 261 (HGEVPQ) the chain is Extracellular. The chain crosses the membrane as a helical span at residues 262 to 284 (IILYLGILLSHANSMMNPIVYAY). Residues 285 to 314 (KIKKFKETYLLIFKTYMICQSSDSLDSSTE) lie on the Cytoplasmic side of the membrane. Cysteine 303 is lipidated: S-palmitoyl cysteine.

The protein belongs to the G-protein coupled receptor 1 family.

It is found in the cell membrane. In terms of biological role, receptor for adenosine. The activity of this receptor is mediated by G proteins which inhibits adenylyl cyclase. The sequence is that of Adenosine receptor A3 (ADORA3) from Canis lupus familiaris (Dog).